A 283-amino-acid polypeptide reads, in one-letter code: Probable cytochrome c oxidase subunit 3 (283 aa).

A run of 6 helical transmembrane segments spans residues Pro26–Met46, Phe51–Trp71, Ile94–Phe114, Cys179–Tyr199, Phe217–Ile237, and Ala261–Phe281.

The protein belongs to the cytochrome c oxidase subunit 3 family.

Its subcellular location is the cell membrane. The catalysed reaction is 4 Fe(II)-[cytochrome c] + O2 + 8 H(+)(in) = 4 Fe(III)-[cytochrome c] + 2 H2O + 4 H(+)(out). The sequence is that of Probable cytochrome c oxidase subunit 3 (ctaE) from Rickettsia conorii (strain ATCC VR-613 / Malish 7).